Here is a 509-residue protein sequence, read N- to C-terminus: 2-isopropylmalate synthase (509 aa).

The 263-residue stretch at 5–267 (IQIFDTTLRD…QTALNLEETK (263 aa)) folds into the Pyruvate carboxyltransferase domain. Residues Asp-14, His-202, His-204, and Asn-238 each coordinate Mn(2+). The interval 391 to 509 (KLETLQLQYV…AAENVEKVGN (119 aa)) is regulatory domain.

The protein belongs to the alpha-IPM synthase/homocitrate synthase family. LeuA type 1 subfamily. Homodimer. Mn(2+) is required as a cofactor.

It localises to the cytoplasm. It carries out the reaction 3-methyl-2-oxobutanoate + acetyl-CoA + H2O = (2S)-2-isopropylmalate + CoA + H(+). It functions in the pathway amino-acid biosynthesis; L-leucine biosynthesis; L-leucine from 3-methyl-2-oxobutanoate: step 1/4. Catalyzes the condensation of the acetyl group of acetyl-CoA with 3-methyl-2-oxobutanoate (2-ketoisovalerate) to form 3-carboxy-3-hydroxy-4-methylpentanoate (2-isopropylmalate). This is 2-isopropylmalate synthase from Staphylococcus aureus (strain bovine RF122 / ET3-1).